A 244-amino-acid chain; its full sequence is Probable phosphatase CA_C0509 (244 aa).

Zn(2+) contacts are provided by His-8, His-10, His-16, His-41, Glu-74, His-102, His-132, Asp-193, and His-195.

The protein belongs to the PHP family. Zn(2+) serves as cofactor.

In Clostridium acetobutylicum (strain ATCC 824 / DSM 792 / JCM 1419 / IAM 19013 / LMG 5710 / NBRC 13948 / NRRL B-527 / VKM B-1787 / 2291 / W), this protein is Probable phosphatase CA_C0509.